A 341-amino-acid polypeptide reads, in one-letter code: Phosphoribosylformylglycinamidine cyclo-ligase (341 aa).

The protein belongs to the AIR synthase family.

It is found in the cytoplasm. It catalyses the reaction 2-formamido-N(1)-(5-O-phospho-beta-D-ribosyl)acetamidine + ATP = 5-amino-1-(5-phospho-beta-D-ribosyl)imidazole + ADP + phosphate + H(+). It participates in purine metabolism; IMP biosynthesis via de novo pathway; 5-amino-1-(5-phospho-D-ribosyl)imidazole from N(2)-formyl-N(1)-(5-phospho-D-ribosyl)glycinamide: step 2/2. In Lachnospira eligens (strain ATCC 27750 / DSM 3376 / VPI C15-48 / C15-B4) (Eubacterium eligens), this protein is Phosphoribosylformylglycinamidine cyclo-ligase.